A 264-amino-acid polypeptide reads, in one-letter code: Anamorsin homolog 2 (264 aa).

The N-terminal SAM-like domain stretch occupies residues 1 to 142 (MAATAAALAV…KVSWSMGSSF (142 aa)). The linker stretch occupies residues 143–174 (PLKKATKGLPKIQIDDDSELIDEDSLLTEDDL). [2Fe-2S] cluster-binding residues include Cys185, Cys194, Cys197, and Cys199. Residues 185-199 (CEVGATRKACKNCTC) form a fe-S binding site A region. [4Fe-4S] cluster is bound by residues Cys225, Cys228, Cys236, and Cys239. 2 consecutive short sequence motifs (cx2C motif) follow at residues 225 to 228 (CGNC) and 236 to 239 (CGTC). The segment at 225-239 (CGNCGLGDAFRCGTC) is fe-S binding site B.

Belongs to the anamorsin family. As to quaternary structure, monomer. [2Fe-2S] cluster serves as cofactor. Requires [4Fe-4S] cluster as cofactor.

Its subcellular location is the cytoplasm. It localises to the mitochondrion intermembrane space. Functionally, component of the cytosolic iron-sulfur (Fe-S) protein assembly (CIA) machinery. Required for the maturation of extramitochondrial Fe-S proteins. Part of an electron transfer chain functioning in an early step of cytosolic Fe-S biogenesis, facilitating the de novo assembly of a [4Fe-4S] cluster on the cytosolic Fe-S scaffold complex. Electrons are transferred from NADPH via a FAD- and FMN-containing diflavin oxidoreductase. Together with the diflavin oxidoreductase, also required for the assembly of the diferric tyrosyl radical cofactor of ribonucleotide reductase (RNR), probably by providing electrons for reduction during radical cofactor maturation in the catalytic small subunit. In Oryza sativa subsp. japonica (Rice), this protein is Anamorsin homolog 2.